The chain runs to 320 residues: Annexin A5 (320 aa).

Alanine 2 carries the N-acetylalanine modification. 4 Annexin repeats span residues 15 to 86 (FDER…ALMK), 87 to 158 (PSRL…VLLQ), 170 to 242 (AQVE…AVVK), and 246 to 317 (SIPA…LLCG). Lysine 29 is covalently cross-linked (Glycyl lysine isopeptide (Lys-Gly) (interchain with G-Cter in SUMO1); alternate). Lysine 29 participates in a covalent cross-link: Glycyl lysine isopeptide (Lys-Gly) (interchain with G-Cter in SUMO2); alternate. Serine 37 carries the phosphoserine modification. N6-acetyllysine occurs at positions 70, 76, 79, 97, and 101. Lysine 290 is modified (N6-succinyllysine). Residues 314–319 (LLCGED) carry the [IL]-x-C-x-x-[DE] motif motif.

The protein belongs to the annexin family. In terms of assembly, monomer. Binds ATRX and EIF5B. Interacts with hepatitis B virus (HBV). In terms of processing, S-nitrosylation is induced by interferon-gamma and oxidatively-modified low-densitity lipoprotein (LDL(ox)) possibly implicating the iNOS-S100A8/9 transnitrosylase complex.

In terms of biological role, this protein is an anticoagulant protein that acts as an indirect inhibitor of the thromboplastin-specific complex, which is involved in the blood coagulation cascade. This Homo sapiens (Human) protein is Annexin A5 (ANXA5).